The chain runs to 88 residues: Small ribosomal subunit protein bS20 (88 aa).

This sequence belongs to the bacterial ribosomal protein bS20 family.

In terms of biological role, binds directly to 16S ribosomal RNA. This is Small ribosomal subunit protein bS20 from Maricaulis maris (strain MCS10) (Caulobacter maris).